Reading from the N-terminus, the 428-residue chain is Glutamate-1-semialdehyde 2,1-aminomutase 1 (428 aa).

Lysine 267 carries the post-translational modification N6-(pyridoxal phosphate)lysine.

This sequence belongs to the class-III pyridoxal-phosphate-dependent aminotransferase family. HemL subfamily. As to quaternary structure, homodimer. It depends on pyridoxal 5'-phosphate as a cofactor.

It is found in the cytoplasm. The enzyme catalyses (S)-4-amino-5-oxopentanoate = 5-aminolevulinate. It functions in the pathway porphyrin-containing compound metabolism; protoporphyrin-IX biosynthesis; 5-aminolevulinate from L-glutamyl-tRNA(Glu): step 2/2. The sequence is that of Glutamate-1-semialdehyde 2,1-aminomutase 1 (hemL1) from Staphylococcus aureus (strain NCTC 8325 / PS 47).